Reading from the N-terminus, the 142-residue chain is MAKKVEAYIKLQVAAGAANPSPPVGPALGQHGVNIMEFCKAFNARTDSVEKGLPTPVVITVYSDRSFTFITKTPPAAVLLKKAAGVKSGSGRPNTEKVGTVTDAQVQEIAETKAADMTGADIEAMKRSIAGTARSMGLVVEG.

Belongs to the universal ribosomal protein uL11 family. In terms of assembly, part of the ribosomal stalk of the 50S ribosomal subunit. Interacts with L10 and the large rRNA to form the base of the stalk. L10 forms an elongated spine to which L12 dimers bind in a sequential fashion forming a multimeric L10(L12)X complex. In terms of processing, one or more lysine residues are methylated.

Functionally, forms part of the ribosomal stalk which helps the ribosome interact with GTP-bound translation factors. The chain is Large ribosomal subunit protein uL11 from Photobacterium profundum (strain SS9).